The primary structure comprises 416 residues: Probable mannose-6-phosphate isomerase (416 aa).

The Zn(2+) site is built by Gln-99, His-101, Glu-126, and His-259. Residue Arg-278 is part of the active site.

This sequence belongs to the mannose-6-phosphate isomerase type 1 family. Requires Zn(2+) as cofactor.

It localises to the cytoplasm. It catalyses the reaction D-mannose 6-phosphate = D-fructose 6-phosphate. The protein operates within nucleotide-sugar biosynthesis; GDP-alpha-D-mannose biosynthesis; alpha-D-mannose 1-phosphate from D-fructose 6-phosphate: step 1/2. Its function is as follows. Involved in the synthesis of the GDP-mannose and dolichol-phosphate-mannose required for a number of critical mannosyl transfer reactions. This Caenorhabditis elegans protein is Probable mannose-6-phosphate isomerase.